Here is a 299-residue protein sequence, read N- to C-terminus: ATP phosphoribosyltransferase (299 aa).

This sequence belongs to the ATP phosphoribosyltransferase family. Long subfamily. As to quaternary structure, equilibrium between an active dimeric form, an inactive hexameric form and higher aggregates. Interconversion between the various forms is largely reversible and is influenced by the natural substrates and inhibitors of the enzyme. Mg(2+) serves as cofactor.

The protein localises to the cytoplasm. It catalyses the reaction 1-(5-phospho-beta-D-ribosyl)-ATP + diphosphate = 5-phospho-alpha-D-ribose 1-diphosphate + ATP. It participates in amino-acid biosynthesis; L-histidine biosynthesis; L-histidine from 5-phospho-alpha-D-ribose 1-diphosphate: step 1/9. Feedback inhibited by histidine. Catalyzes the condensation of ATP and 5-phosphoribose 1-diphosphate to form N'-(5'-phosphoribosyl)-ATP (PR-ATP). Has a crucial role in the pathway because the rate of histidine biosynthesis seems to be controlled primarily by regulation of HisG enzymatic activity. This chain is ATP phosphoribosyltransferase, found in Salmonella dublin (strain CT_02021853).